Reading from the N-terminus, the 465-residue chain is tRNA (guanine(37)-N(1))-methyltransferase (465 aa).

Residues histidine 189, 227–228, and 255–256 each bind S-adenosyl-L-methionine; these read DL and DA. The tract at residues 283–362 is disordered; sequence YPKEGVPANE…GPGPPPSKPW (80 aa). Polar residues predominate over residues 291–320; it reads NENSSSNGNHNDVREGSQNGANESSVASTT. Residues 343-352 are compositionally biased toward basic residues; that stretch reads TKRRNNKRVR. Asparagine 371 is an S-adenosyl-L-methionine binding site.

It belongs to the class I-like SAM-binding methyltransferase superfamily. TRM5/TYW2 family. As to quaternary structure, monomer.

It is found in the mitochondrion matrix. Its subcellular location is the nucleus. The protein localises to the cytoplasm. It catalyses the reaction guanosine(37) in tRNA + S-adenosyl-L-methionine = N(1)-methylguanosine(37) in tRNA + S-adenosyl-L-homocysteine + H(+). In terms of biological role, specifically methylates the N1 position of guanosine-37 in various cytoplasmic and mitochondrial tRNAs. Methylation is not dependent on the nature of the nucleoside 5' of the target nucleoside. This is the first step in the biosynthesis of wybutosine (yW), a modified base adjacent to the anticodon of tRNAs and required for accurate decoding. In Sorghum bicolor (Sorghum), this protein is tRNA (guanine(37)-N(1))-methyltransferase.